We begin with the raw amino-acid sequence, 167 residues long: Dual specificity protein phosphatase 1B (167 aa).

Positions 24 to 165 (DLSEIQQGLF…LQQFEKSIQG (142 aa)) constitute a Tyrosine-protein phosphatase domain. C109 functions as the Phosphocysteine intermediate in the catalytic mechanism.

It belongs to the protein-tyrosine phosphatase family. Non-receptor class dual specificity subfamily. In terms of assembly, associates with MPK3 and MPK6. Interacts with MPK6 is promoted during HR-like responses triggered by fungal elicitors, whereas interaction with MPK3 in repressed. In terms of tissue distribution, expressed in flowers, seedlings, roots, leaves, and seeds. Present in stomata and meristematic cells.

The protein resides in the nucleus. The protein localises to the cytoplasm. It carries out the reaction O-phospho-L-tyrosyl-[protein] + H2O = L-tyrosyl-[protein] + phosphate. The enzyme catalyses O-phospho-L-seryl-[protein] + H2O = L-seryl-[protein] + phosphate. It catalyses the reaction O-phospho-L-threonyl-[protein] + H2O = L-threonyl-[protein] + phosphate. Has a dual specificity toward Ser/Thr and Tyr-containing proteins. Prevents biotic and abiotic stress responses, including ozone, oxidative stress and pathogen attacks; represses MAPK activities during hypersensitive response to limit the spread of the HR response after infection by necrotrophic pathogen such as Botrytis cinerea. May be also involved in ABA and salt responses. Dephosphorylates MPK3 and MPK6. The sequence is that of Dual specificity protein phosphatase 1B (DSPTP1B) from Arabidopsis thaliana (Mouse-ear cress).